A 714-amino-acid chain; its full sequence is MTKAPKPAPDIATLTKAKAKVEAMRLRLEIERHNSAYYQHDAPTVSDAEYDALRRRLEAIEAKFPELVSASSPTQTVGAAPARGFAKVQHAVPMLSLGNAFADDEVTEFVERVQRFLRLDAVPSIVAEPKIDGLSLSLRYEHGELMRAATRGDGFTGEDVTANVRTIADIPTTLKAKTIPAACELRGEVYMLKQDFLALNKRQEEAGDTVFANPRNSAAGSLRQKDVAITASRPLKFFAYAWGEMSDYPMDEPTQFKMLGWLKQAGFVVNPEITLCTSVDDALAFYRRIGEQRAALPYDIDGVVYKVDRLDYQERLGFVSRSPRWAIAHKFAAEQATTVLEKIDIQVGRTGALTPVARLQPVTVGGVVVQNATLHNEDYIKGLGNDGSPLRDGVDIREGDTVVVQRAGDVIPQIVSVVLDKRPADATPYHFPHKCPVCGSHAAREEGEAVWRCTGALICPAQAVERLKHFVSRLAFDIDGLGEKQIVLFHERGWVKEPADIFTLQARNAALKLEDIEGYGETSVRNLFAAIDARRTIELHRLIFALGIRHVGEGNAKLLARHYGTLDAFLAAMRAAAEGQTEEGNTSEAYQDLDNIAGIGEVVAAAVVEFFAEPRNVAALDALLAELKDVLPAEQARRDTAVAGKTVVFTGSLTKFTRDEAKAAAERLGAKVAGSVSKKTDYVVAGADAGSKLTKAKDLGVAVLTEDEWLALIS.

NAD(+) contacts are provided by residues 47–51 (DAEYD), 96–97 (SL), and Glu-128. Catalysis depends on Lys-130, which acts as the N6-AMP-lysine intermediate. The NAD(+) site is built by Arg-151, Glu-188, Lys-306, and Lys-330. Positions 435, 438, 453, and 459 each coordinate Zn(2+). In terms of domain architecture, BRCT spans 637 to 714 (RRDTAVAGKT…TEDEWLALIS (78 aa)).

This sequence belongs to the NAD-dependent DNA ligase family. LigA subfamily. It depends on Mg(2+) as a cofactor. Requires Mn(2+) as cofactor.

It catalyses the reaction NAD(+) + (deoxyribonucleotide)n-3'-hydroxyl + 5'-phospho-(deoxyribonucleotide)m = (deoxyribonucleotide)n+m + AMP + beta-nicotinamide D-nucleotide.. Functionally, DNA ligase that catalyzes the formation of phosphodiester linkages between 5'-phosphoryl and 3'-hydroxyl groups in double-stranded DNA using NAD as a coenzyme and as the energy source for the reaction. It is essential for DNA replication and repair of damaged DNA. The chain is DNA ligase from Rhodopseudomonas palustris (strain HaA2).